A 350-amino-acid chain; its full sequence is Heme A synthase (350 aa).

8 helical membrane-spanning segments follow: residues 14–34, 95–115, 125–145, 162–182, 202–222, 260–280, 296–316, and 317–337; these read VAIWLFLCSVMVILMVGIGGF, YVHRLVARLTGLVFVLPFIYF, VVIKLFVALLFGALQAFAGWY, LALHLLLALIIFALFSYQFFD, VGIILVLIMIQIIFGAFVAGL, VQFIHRALALLILTLVVILTV, IIQIILGVITLLLHIPIAIAI, and AHQVFSFILFGSSLYFLCYLR. A heme-binding site is contributed by histidine 264. Heme is bound at residue histidine 318.

The protein belongs to the COX15/CtaA family. Type 2 subfamily. As to quaternary structure, interacts with CtaB. Heme b is required as a cofactor.

It localises to the cell membrane. The catalysed reaction is Fe(II)-heme o + 2 A + H2O = Fe(II)-heme a + 2 AH2. It participates in porphyrin-containing compound metabolism; heme A biosynthesis; heme A from heme O: step 1/1. Catalyzes the conversion of heme O to heme A by two successive hydroxylations of the methyl group at C8. The first hydroxylation forms heme I, the second hydroxylation results in an unstable dihydroxymethyl group, which spontaneously dehydrates, resulting in the formyl group of heme A. In Wolbachia pipientis wMel, this protein is Heme A synthase.